A 61-amino-acid polypeptide reads, in one-letter code: Small ribosomal subunit protein uS14B (61 aa).

Zn(2+) is bound by residues Cys-24, Cys-27, Cys-40, and Cys-43.

It belongs to the universal ribosomal protein uS14 family. Zinc-binding uS14 subfamily. In terms of assembly, part of the 30S ribosomal subunit. Contacts proteins S3 and S10. It depends on Zn(2+) as a cofactor.

Binds 16S rRNA, required for the assembly of 30S particles and may also be responsible for determining the conformation of the 16S rRNA at the A site. In Mycolicibacterium smegmatis (strain ATCC 700084 / mc(2)155) (Mycobacterium smegmatis), this protein is Small ribosomal subunit protein uS14B.